We begin with the raw amino-acid sequence, 508 residues long: MSQTETQENKGLGRKVQAFGSFLSSMIMPNIGAFIAWGFIAAIFIDGGWWPNKDLSELAGPMISYLIPLLIAYSGGRLIHEMRGGIIAAVATMGVIVALPDTPMLLGAMIMGPLVGWLMKKTDEFIQPRTPQGFEMLFNNFSAGILGFIMTIVGFKILAPIMEFIMHILSLAVEALVHAHLLPLVSIIVEPAKIVFLNNAINHGVFTPLGADQAASAGQSILYTIESNPGPGLGILVAYMIFGKGTAKATSYGAGIIHFLGGIHEIYFPYVLMRPLLFIAVILGGMTGVATYSLLDFGFKSPASPGSFIVYMLNAPKGEFLHMVLGVLLAAIVSFIVAALILKFTKEPEEDLEAATEKMEASKGKKSSVSSKLKGNEDNNATSTTASTSTSENNEEQSEEALLDNYDTENVDAHDYSKVNHVIFACDAGMGSSAMGASMLRNKFKKAGIQDVNVTNTAINQLPSDAQLVITQKKLTDRAIKQVPNAIHISVDNFLNSPRYDELLENLK.

Topologically, residues 1–30 are cytoplasmic; the sequence is MSQTETQENKGLGRKVQAFGSFLSSMIMPN. The PTS EIIC type-2 domain maps to 19-351; that stretch reads FGSFLSSMIM…LKFTKEPEED (333 aa). Residues 31-52 traverse the membrane as a helical segment; the sequence is IGAFIAWGFIAAIFIDGGWWPN. The Extracellular segment spans residues 53–56; it reads KDLS. The helical transmembrane segment at 57-77 threads the bilayer; the sequence is ELAGPMISYLIPLLIAYSGGR. The Cytoplasmic segment spans residues 78–141; the sequence is LIHEMRGGII…QGFEMLFNNF (64 aa). Residues 142–163 traverse the membrane as a helical segment; it reads SAGILGFIMTIVGFKILAPIME. Over 164-172 the chain is Extracellular; that stretch reads FIMHILSLA. A helical transmembrane segment spans residues 173–193; the sequence is VEALVHAHLLPLVSIIVEPAK. At 194 to 280 the chain is on the cytoplasmic side; sequence IVFLNNAINH…VLMRPLLFIA (87 aa). A helical transmembrane segment spans residues 281 to 300; the sequence is VILGGMTGVATYSLLDFGFK. The Extracellular portion of the chain corresponds to 301-320; that stretch reads SPASPGSFIVYMLNAPKGEF. A helical membrane pass occupies residues 321-342; that stretch reads LHMVLGVLLAAIVSFIVAALIL. The Cytoplasmic segment spans residues 343–508; it reads KFTKEPEEDL…RYDELLENLK (166 aa). Residues 355-400 form a disordered region; the sequence is ATEKMEASKGKKSSVSSKLKGNEDNNATSTTASTSTSENNEEQSEE. The segment covering 367–392 has biased composition (low complexity); sequence SSVSSKLKGNEDNNATSTTASTSTSE. The PTS EIIB type-2 domain occupies 420-508; sequence NHVIFACDAG…RYDELLENLK (89 aa). C426 functions as the Phosphocysteine intermediate; for EIIB activity in the catalytic mechanism. A Phosphocysteine; by EIIA modification is found at C426.

As to quaternary structure, homodimer.

It localises to the cell membrane. It catalyses the reaction D-mannitol(out) + N(pros)-phospho-L-histidyl-[protein] = D-mannitol 1-phosphate(in) + L-histidyl-[protein]. Functionally, the phosphoenolpyruvate-dependent sugar phosphotransferase system (sugar PTS), a major carbohydrate active transport system, catalyzes the phosphorylation of incoming sugar substrates concomitantly with their translocation across the cell membrane. The enzyme II CmtAB PTS system is involved in D-mannitol transport. The polypeptide is PTS system mannitol-specific EIICB component (mtlA) (Staphylococcus saprophyticus subsp. saprophyticus (strain ATCC 15305 / DSM 20229 / NCIMB 8711 / NCTC 7292 / S-41)).